The chain runs to 72 residues: MKAWVIGLLVICAVVIAEPVESRNYIEYGAINKCAGPNPPPGCNPPGTEQKNPTPVNEYSRGCSKIHRCRRD.

Residues 1–17 form the signal peptide; sequence MKAWVIGLLVICAVVIA. Disulfide bonds link Cys-34-Cys-43 and Cys-63-Cys-69. The tract at residues 37 to 60 is disordered; that stretch reads PNPPPGCNPPGTEQKNPTPVNEYS.

This sequence belongs to the plant rapid alkalinization factor (RALF) family.

It is found in the secreted. In terms of biological role, cell signaling peptide that may regulate plant stress, growth, and development. Mediates a rapid alkalinization of extracellular space by mediating a transient increase in the cytoplasmic Ca(2+) concentration leading to a calcium-dependent signaling events through a cell surface receptor and a concomitant activation of some intracellular mitogen-activated protein kinases. This is Protein RALF-like 12 (RALFL12) from Arabidopsis thaliana (Mouse-ear cress).